Here is a 344-residue protein sequence, read N- to C-terminus: tRNA N6-adenosine threonylcarbamoyltransferase (344 aa).

The Fe cation site is built by His111 and His115. Residues 133–137 (LVSGG), Asp166, Gly179, and Asn283 contribute to the substrate site. Asp311 is a binding site for Fe cation.

Belongs to the KAE1 / TsaD family. Requires Fe(2+) as cofactor.

The protein resides in the cytoplasm. The enzyme catalyses L-threonylcarbamoyladenylate + adenosine(37) in tRNA = N(6)-L-threonylcarbamoyladenosine(37) in tRNA + AMP + H(+). Its function is as follows. Required for the formation of a threonylcarbamoyl group on adenosine at position 37 (t(6)A37) in tRNAs that read codons beginning with adenine. Is involved in the transfer of the threonylcarbamoyl moiety of threonylcarbamoyl-AMP (TC-AMP) to the N6 group of A37, together with TsaE and TsaB. TsaD likely plays a direct catalytic role in this reaction. The polypeptide is tRNA N6-adenosine threonylcarbamoyltransferase (Orientia tsutsugamushi (strain Ikeda) (Rickettsia tsutsugamushi)).